A 402-amino-acid chain; its full sequence is MSPKSKSTNKTYTIVIKLGTSSICDEKTHEPLISNLSLIVETVVKLRKLGHNVVLVSSGGIAMGLRRLDLPKRPSKLSAVQAIAAVGQGRLISLWDTLFTQLRQPIAQVLITRNDIAERSQYVNAANTISELLHFGVVPIVNENDTLSVQEIRFGDNDTLSAITAGMINADYLFLLTDVDCLYTDNPRTNPDAKPILKIHDTSMVNANVSTPGSGVGTGGMKTKLIAADLGTSSGVNVIICRGSKPSSIFDIIRQESSDNKNESVELPLHTHFVAKKQGRIRDRHFWLLHGLKSHGSLEIDRGAFEAITRTNRAGLLPVGVTKVHGHFSAHQAVTVIYNGEEIGRALVNYSSTEIDLIKGKRSKEIASILGYNETEYVAYRDYLVVHGLNSHHDSQVSSDEH.

S58, D145, and N157 together coordinate substrate. ATP contacts are provided by residues 177 to 178 (TD) and 218 to 224 (TGGMKTK). The PUA domain maps to 295–373 (HGSLEIDRGA…KEIASILGYN (79 aa)).

The protein belongs to the glutamate 5-kinase family.

It is found in the cytoplasm. It catalyses the reaction L-glutamate + ATP = L-glutamyl 5-phosphate + ADP. It functions in the pathway amino-acid biosynthesis; L-proline biosynthesis; L-glutamate 5-semialdehyde from L-glutamate: step 1/2. Its function is as follows. Catalyzes the transfer of a phosphate group to glutamate to form glutamate 5-phosphate which rapidly cyclizes to 5-oxoproline. The polypeptide is Probable glutamate 5-kinase (Schizosaccharomyces pombe (strain 972 / ATCC 24843) (Fission yeast)).